The sequence spans 319 residues: Dehydrogenase/reductase SDR family member 9 (319 aa).

The N-terminal stretch at 1–20 is a signal peptide; the sequence is MLFWLLALLFLCAFLWNYKG. Residues 34–58 and Asp-83 contribute to the NAD(+) site; that span reads ITGC…RVIA. Ser-164 is a substrate binding site. Tyr-176 functions as the Proton acceptor in the catalytic mechanism. Lys-180 serves as a coordination point for NAD(+).

The protein belongs to the short-chain dehydrogenases/reductases (SDR) family. As to quaternary structure, homotetramer.

The protein resides in the microsome membrane. It is found in the endoplasmic reticulum membrane. It catalyses the reaction 3beta-hydroxy-5alpha-pregnane-20-one + NAD(+) = 5alpha-pregnane-3,20-dione + NADH + H(+). The catalysed reaction is 17beta-hydroxy-5alpha-androstan-3-one + NAD(+) = 5alpha-androstan-3,17-dione + NADH + H(+). The enzyme catalyses androsterone + NAD(+) = 5alpha-androstan-3,17-dione + NADH + H(+). It carries out the reaction 5alpha-androstane-3alpha,17beta-diol + NAD(+) = 17beta-hydroxy-5alpha-androstan-3-one + NADH + H(+). It catalyses the reaction all-trans-retinol + NAD(+) = all-trans-retinal + NADH + H(+). The catalysed reaction is 3alpha-hydroxy-5alpha-pregnan-20-one + NAD(+) = 5alpha-pregnane-3,20-dione + NADH + H(+). Its function is as follows. 3-alpha-hydroxysteroid dehydrogenase that converts 3-alpha-tetrahydroprogesterone (allopregnanolone) to dihydroxyprogesterone and 3-alpha-androstanediol to dihydroxyprogesterone. Also plays a role in the biosynthesis of retinoic acid. Can utilize both NADH and NADPH. In Mus musculus (Mouse), this protein is Dehydrogenase/reductase SDR family member 9 (Dhrs9).